A 399-amino-acid chain; its full sequence is Elongation factor Tu (399 aa).

Residues 10-209 (KPHVNIGTIG…AVDDYIPTPV (200 aa)) form the tr-type G domain. The tract at residues 19–26 (GHVDHGKT) is G1. GTP is bound at residue 19–26 (GHVDHGKT). Residue threonine 26 coordinates Mg(2+). The G2 stretch occupies residues 62 to 66 (GITIN). Residues 83 to 86 (DCPG) are G3. GTP-binding positions include 83-87 (DCPGH) and 138-141 (NKCD). Residues 138-141 (NKCD) form a G4 region. Residues 175-177 (SAY) are G5.

The protein belongs to the TRAFAC class translation factor GTPase superfamily. Classic translation factor GTPase family. EF-Tu/EF-1A subfamily. In terms of assembly, monomer.

The protein resides in the cytoplasm. The enzyme catalyses GTP + H2O = GDP + phosphate + H(+). GTP hydrolase that promotes the GTP-dependent binding of aminoacyl-tRNA to the A-site of ribosomes during protein biosynthesis. This Bifidobacterium longum (strain DJO10A) protein is Elongation factor Tu.